The primary structure comprises 154 residues: SsrA-binding protein (154 aa).

Residues 132–154 (KRESIKKRQDKRDMERALKRGAE) are disordered.

This sequence belongs to the SmpB family.

It is found in the cytoplasm. Required for rescue of stalled ribosomes mediated by trans-translation. Binds to transfer-messenger RNA (tmRNA), required for stable association of tmRNA with ribosomes. tmRNA and SmpB together mimic tRNA shape, replacing the anticodon stem-loop with SmpB. tmRNA is encoded by the ssrA gene; the 2 termini fold to resemble tRNA(Ala) and it encodes a 'tag peptide', a short internal open reading frame. During trans-translation Ala-aminoacylated tmRNA acts like a tRNA, entering the A-site of stalled ribosomes, displacing the stalled mRNA. The ribosome then switches to translate the ORF on the tmRNA; the nascent peptide is terminated with the 'tag peptide' encoded by the tmRNA and targeted for degradation. The ribosome is freed to recommence translation, which seems to be the essential function of trans-translation. This is SsrA-binding protein from Acaryochloris marina (strain MBIC 11017).